Consider the following 340-residue polypeptide: Glucan endo-1,3-beta-glucosidase (340 aa).

The first 28 residues, 1 to 28 (MATKASLSIKGFALLVSVLVAVPTRVQS), serve as a signal peptide directing secretion. The Proton donor role is filled by glutamate 122. Glutamate 264 acts as the Nucleophile in catalysis.

Belongs to the glycosyl hydrolase 17 family. As to quaternary structure, monomer. Expressed in fruit peel and pulp.

The enzyme catalyses Hydrolysis of (1-&gt;3)-beta-D-glucosidic linkages in (1-&gt;3)-beta-D-glucans.. In terms of biological role, possesses beta-1,3-endoglucanase activity in vitro. May play a role in fruit pulp softening process. Can cleave beta-1,6-branched glucans in vitro. The chain is Glucan endo-1,3-beta-glucosidase from Musa acuminata (Banana).